The following is a 1246-amino-acid chain: Probable membrane antigen 3 (1246 aa).

The protein localises to the virion tegument. The protein is Probable membrane antigen 3 (3) of Saimiri sciureus (Common squirrel monkey).